The primary structure comprises 836 residues: General vesicular transport factor p115 (836 aa).

The tract at residues Met1–Ser22 is disordered. Residues Leu12–Ser22 are compositionally biased toward polar residues. ARM repeat units follow at residues Ala24–Gln64, Gly65–Pro124, His126–Val166, Met169–Glu210, Asn211–Gly256, Arg316–Val359, Pro368–Leu413, Ser424–Leu463, Thr477–Leu518, Thr523–Arg577, and Gly579–Gly636. Coiled coils occupy residues Ile663–Thr707 and Asn744–Gly806. A disordered region spans residues Glu803–Arg836. Positions Gly806 to Val816 are enriched in polar residues. Positions Ala817–Arg836 are enriched in low complexity.

It belongs to the VDP/USO1/EDE1 family.

The protein localises to the cytoplasm. It is found in the golgi apparatus. The protein resides in the golgi stack. Its subcellular location is the golgi stack membrane. It localises to the endoplasmic reticulum. The protein localises to the endoplasmic reticulum membrane. Functionally, essential for maintaining the architecture of the Golgi stacks and for normal organization of the transitional endoplasmic reticulum (tER). Required for both the formation of the Golgi stacks and the maintenance of the individual cisternae. The protein is General vesicular transport factor p115 of Drosophila melanogaster (Fruit fly).